The chain runs to 306 residues: Putative secretory carrier-associated membrane protein 1 (306 aa).

The tract at residues 1 to 60 (MAGRYDSNPFEEDDVNPFSEQARGKAGGQPSYGGGAFYMPNPRNVPSMSSNSRLSPLPPE) is disordered. Residues 1–141 (MAGRYDSNPF…EIPSHLQRMQ (141 aa)) lie on the Cytoplasmic side of the membrane. A compositionally biased stretch (gly residues) spans 25–36 (KAGGQPSYGGGA). Positions 44–54 (NVPSMSSNSRL) are enriched in polar residues. Residues 72–109 (LDSSKDLKNREKELQAREAELNKREKELKRREEAAARA) adopt a coiled-coil conformation. A run of 4 helical transmembrane segments spans residues 142-162 (YVAF…VIAV), 174-194 (IWLL…VLWY), 209-229 (FGLF…SAVA), and 257-277 (IFYF…IWVI). Residues 278-306 (QQVYMYFRGSGKAAEMKRDATRGAMRAAF) lie on the Cytoplasmic side of the membrane.

It belongs to the SCAMP family.

The protein resides in the cell membrane. It is found in the cytoplasmic vesicle. It localises to the secretory vesicle membrane. Probably involved in membrane trafficking. This is Putative secretory carrier-associated membrane protein 1 (SCAMP1) from Oryza sativa subsp. indica (Rice).